A 348-amino-acid polypeptide reads, in one-letter code: Phosphoribosylformylglycinamidine cyclo-ligase (348 aa).

Belongs to the AIR synthase family.

The protein resides in the cytoplasm. The enzyme catalyses 2-formamido-N(1)-(5-O-phospho-beta-D-ribosyl)acetamidine + ATP = 5-amino-1-(5-phospho-beta-D-ribosyl)imidazole + ADP + phosphate + H(+). Its pathway is purine metabolism; IMP biosynthesis via de novo pathway; 5-amino-1-(5-phospho-D-ribosyl)imidazole from N(2)-formyl-N(1)-(5-phospho-D-ribosyl)glycinamide: step 2/2. The sequence is that of Phosphoribosylformylglycinamidine cyclo-ligase from Ruegeria pomeroyi (strain ATCC 700808 / DSM 15171 / DSS-3) (Silicibacter pomeroyi).